The sequence spans 191 residues: SCO2-like protein RP031 (191 aa).

It belongs to the SCO1/2 family.

The chain is SCO2-like protein RP031 from Rickettsia prowazekii (strain Madrid E).